Here is a 139-residue protein sequence, read N- to C-terminus: UPF0216 protein MJ1224 (139 aa).

This sequence belongs to the UPF0216 family.

This Methanocaldococcus jannaschii (strain ATCC 43067 / DSM 2661 / JAL-1 / JCM 10045 / NBRC 100440) (Methanococcus jannaschii) protein is UPF0216 protein MJ1224.